We begin with the raw amino-acid sequence, 300 residues long: Tetrahydromethanopterin S-methyltransferase subunit E (300 aa).

The next 6 membrane-spanning stretches (helical) occupy residues 62 to 82 (PVSY…LMGM), 86 to 106 (PILA…AYSV), 135 to 155 (PIVG…YLAV), 158 to 178 (LGNP…VGAI), 226 to 246 (YFCS…IIFL), and 261 to 281 (LITK…TTLL).

The protein belongs to the MtrE family. In terms of assembly, the complex is composed of 8 subunits; MtrA, MtrB, MtrC, MtrD, MtrE, MtrF, MtrG and MtrH.

Its subcellular location is the cell membrane. It catalyses the reaction 5-methyl-5,6,7,8-tetrahydromethanopterin + coenzyme M + 2 Na(+)(in) = 5,6,7,8-tetrahydromethanopterin + methyl-coenzyme M + 2 Na(+)(out). The protein operates within one-carbon metabolism; methanogenesis from CO(2); methyl-coenzyme M from 5,10-methylene-5,6,7,8-tetrahydromethanopterin: step 2/2. In terms of biological role, part of a complex that catalyzes the formation of methyl-coenzyme M and tetrahydromethanopterin from coenzyme M and methyl-tetrahydromethanopterin. This is an energy-conserving, sodium-ion translocating step. This is Tetrahydromethanopterin S-methyltransferase subunit E from Methanococcus aeolicus (strain ATCC BAA-1280 / DSM 17508 / OCM 812 / Nankai-3).